Here is a 183-residue protein sequence, read N- to C-terminus: Cell division protein SepF (183 aa).

A disordered region spans residues 13–58; sequence MHDDDDFDDDYEDYDDDFDEDYEDDKPSARKRLFTGSSKKDSVADE. Over residues 16–36 the composition is skewed to acidic residues; it reads DDDFDDDYEDYDDDFDEDYED.

This sequence belongs to the SepF family. Homodimer. Interacts with FtsZ.

The protein resides in the cytoplasm. In terms of biological role, cell division protein that is part of the divisome complex and is recruited early to the Z-ring. Probably stimulates Z-ring formation, perhaps through the cross-linking of FtsZ protofilaments. Its function overlaps with FtsA. This Lachnospira eligens (strain ATCC 27750 / DSM 3376 / VPI C15-48 / C15-B4) (Eubacterium eligens) protein is Cell division protein SepF.